The chain runs to 187 residues: V-type ATP synthase subunit E (187 aa).

Belongs to the V-ATPase E subunit family.

Produces ATP from ADP in the presence of a proton gradient across the membrane. The chain is V-type ATP synthase subunit E from Clostridioides difficile (strain 630) (Peptoclostridium difficile).